Reading from the N-terminus, the 131-residue chain is Transcription antitermination protein NusB (131 aa).

This sequence belongs to the NusB family.

In terms of biological role, involved in transcription antitermination. Required for transcription of ribosomal RNA (rRNA) genes. Binds specifically to the boxA antiterminator sequence of the ribosomal RNA (rrn) operons. In Campylobacter curvus (strain 525.92), this protein is Transcription antitermination protein NusB.